The primary structure comprises 485 residues: Arginine biosynthesis bifunctional protein ArgJ, mitochondrial (485 aa).

Substrate is bound by residues threonine 185, lysine 214, threonine 225, and glutamate 315. Threonine 225 functions as the Nucleophile in the catalytic mechanism.

Belongs to the ArgJ family. Heterodimer of an alpha and a beta chain. In terms of processing, the alpha and beta chains are autoproteolytically processed from a single precursor protein within the mitochondrion.

It localises to the mitochondrion matrix. It catalyses the reaction N(2)-acetyl-L-ornithine + L-glutamate = N-acetyl-L-glutamate + L-ornithine. It carries out the reaction L-glutamate + acetyl-CoA = N-acetyl-L-glutamate + CoA + H(+). The protein operates within amino-acid biosynthesis; L-arginine biosynthesis; L-ornithine and N-acetyl-L-glutamate from L-glutamate and N(2)-acetyl-L-ornithine (cyclic): step 1/1. Its pathway is amino-acid biosynthesis; L-arginine biosynthesis; N(2)-acetyl-L-ornithine from L-glutamate: step 1/4. In terms of biological role, catalyzes two activities which are involved in the cyclic version of arginine biosynthesis: the synthesis of acetylglutamate from glutamate and acetyl-CoA, and of ornithine by transacetylation between acetylornithine and glutamate. This is Arginine biosynthesis bifunctional protein ArgJ, mitochondrial from Penicillium rubens (strain ATCC 28089 / DSM 1075 / NRRL 1951 / Wisconsin 54-1255) (Penicillium chrysogenum).